The primary structure comprises 376 residues: MAPSTKVLSLLLLYVVVSLASGDESIINDHLQLPSDGKWRTDEEVRSIYLQWSAEHGKTNNNNNGIINDQDKRFNIFKDNLRFIDLHNEDNKNATYKLGLTKFTDLTNDEYRKLYLGARTEPARRIAKAKNVNQKYSAAVNGKEVPETVDWRQKGAVNPIKDQGTCGSCWAFSTTAAVEGINKIVTGELISLSEQELVDCDKSYNQGCNGGLMDYAFQFIMKNGGLNTEKDYPYRGFGGKCNSFLKNSRVVSIDGYEDVPTKDETALKKAISYQPVSVAIEAGGRIFQHYQSGIFTGSCGTNLDHAVVAVGYGSENGVDYWIVRNSWGPRWGEEGYIRMERNLAASKSGKCGIAVEASYPVKYSPNPVRGNTISSV.

Positions 1–22 are cleaved as a signal peptide; that stretch reads MAPSTKVLSLLLLYVVVSLASG. Residues 23–144 constitute a propeptide, activation peptide; it reads DESIINDHLQ…KYSAAVNGKE (122 aa). Asn-93 is a glycosylation site (N-linked (GlcNAc...) asparagine). Cystine bridges form between Cys-166/Cys-208, Cys-200/Cys-241, and Cys-299/Cys-351. The active site involves Cys-169. Active-site residues include His-305 and Asn-325.

Belongs to the peptidase C1 family.

Probable thiol protease. This is Germination-specific cysteine protease 1 from Arabidopsis thaliana (Mouse-ear cress).